A 492-amino-acid chain; its full sequence is N-succinylglutamate 5-semialdehyde dehydrogenase (492 aa).

220-225 contributes to the NAD(+) binding site; sequence GSASTG. Catalysis depends on residues E243 and C277.

It belongs to the aldehyde dehydrogenase family. AstD subfamily.

The enzyme catalyses N-succinyl-L-glutamate 5-semialdehyde + NAD(+) + H2O = N-succinyl-L-glutamate + NADH + 2 H(+). It participates in amino-acid degradation; L-arginine degradation via AST pathway; L-glutamate and succinate from L-arginine: step 4/5. Catalyzes the NAD-dependent reduction of succinylglutamate semialdehyde into succinylglutamate. The protein is N-succinylglutamate 5-semialdehyde dehydrogenase of Salmonella enteritidis PT4 (strain P125109).